A 1888-amino-acid chain; its full sequence is Zinc finger protein 106 (1888 aa).

The segment at 5 to 29 (RKCILCHIVYGSKKEMDEHMRSMLH) adopts a C2H2-type 1; atypical zinc-finger fold. The segment at 43–67 (HECRVCRVTEVGLSAYAKHISGQLH) adopts a C2H2-type 2; atypical zinc-finger fold. Positions 68–187 (KDNVDAQERE…GPRGSSVWHK (120 aa)) are disordered. Acidic residues predominate over residues 75-89 (EREDDGKEEEEEEYF). Composition is skewed to basic and acidic residues over residues 90–108 (DKELVQLIQERKEQSRQDE), 118–138 (SDDRQPQWRREDRIPYQDRES), and 150–160 (PQRDWKWEKDG). Lysine 91 is covalently cross-linked (Glycyl lysine isopeptide (Lys-Gly) (interchain with G-Cter in SUMO2)). Lysine 155 participates in a covalent cross-link: Glycyl lysine isopeptide (Lys-Gly) (interchain with G-Cter in SUMO2). Over residues 161–175 (FNSTRKNSFPHSLRN) the composition is skewed to polar residues. Residues lysine 265 and lysine 309 each participate in a glycyl lysine isopeptide (Lys-Gly) (interchain with G-Cter in SUMO2) cross-link. Disordered stretches follow at residues 287-326 (KKSNKPSKYSQERCKWQRQDRDKAAKYRSPPEGYASDTFP) and 338-362 (RESQTTKQTDTAASKINGKNGTKAR). The span at 296 to 311 (SQERCKWQRQDRDKAA) shows a compositional bias: basic and acidic residues. Over residues 342–357 (TTKQTDTAASKINGKN) the composition is skewed to polar residues. Residues lysine 375, lysine 384, lysine 390, lysine 435, lysine 469, and lysine 479 each participate in a glycyl lysine isopeptide (Lys-Gly) (interchain with G-Cter in SUMO2) cross-link. Disordered regions lie at residues 410–437 (KPVDKTSNPPVIKTQKAGPPGSPSHKAI) and 453–525 (TEQS…TSKS). Over residues 481–491 (GPHKQNLKNRS) the composition is skewed to basic residues. Polar residues predominate over residues 507–525 (LLNTSTLEGSHGSSYTSKS). Residues lysine 524, lysine 534, and lysine 544 each participate in a glycyl lysine isopeptide (Lys-Gly) (interchain with G-Cter in SUMO2) cross-link. Residues 537–617 (KTVSGTQKEP…SAMTSDAENH (81 aa)) form a disordered region. Polar residues predominate over residues 551–572 (NNTSQKAQDTVLQCPKTLQNPL). Lysine 577 participates in a covalent cross-link: Glycyl lysine isopeptide (Lys-Gly) (interchain with G-Cter in SUMO2). Positions 577–593 (KRMENDAKESSVEESAK) are enriched in basic and acidic residues. Residues 597–613 (SIESQPHSAGNSAMTSD) are compositionally biased toward polar residues. Residue lysine 620 forms a Glycyl lysine isopeptide (Lys-Gly) (interchain with G-Cter in SUMO2) linkage. A disordered region spans residues 635 to 661 (STHTVDKEQGSQIPGTPENLSTSPRNS). Polar residues predominate over residues 644–661 (GSQIPGTPENLSTSPRNS). 2 positions are modified to phosphoserine: serine 657 and serine 677. Glycyl lysine isopeptide (Lys-Gly) (interchain with G-Cter in SUMO2) cross-links involve residues lysine 687, lysine 700, lysine 721, lysine 738, lysine 758, lysine 792, and lysine 824. Residues 696 to 728 (NNLVKSDGPFETESFEDTSLDTELQKPDLNNQP) are disordered. Residues serine 876, serine 878, serine 881, and serine 909 each carry the phosphoserine modification. Positions 894–920 (TGEGTGKENEAQQSPSPNTALSAAQSQ) are disordered. Residues 904 to 920 (AQQSPSPNTALSAAQSQ) are compositionally biased toward polar residues. Residue lysine 921 forms a Glycyl lysine isopeptide (Lys-Gly) (interchain with G-Cter in SUMO2) linkage. Residue serine 953 is modified to Phosphoserine. Residues 968 to 986 (ARDLHSQERSTPLSERHAQ) show a composition bias toward basic and acidic residues. Disordered stretches follow at residues 968-1064 (ARDL…ERSQ), 1281-1461 (EQGN…SKKD), and 1468-1487 (QNPIETSRSGCDEVSSTSEL). The segment covering 992 to 1008 (GNSLSSNASSGHAVSSL) has biased composition (low complexity). Over residues 1013-1022 (TDSSCTSGAE) the composition is skewed to polar residues. Threonine 1036 bears the Phosphothreonine mark. A phosphoserine mark is found at serine 1040, serine 1041, and serine 1046. The segment covering 1050–1060 (KNKRRKIKGKK) has biased composition (basic residues). A compositionally biased stretch (polar residues) spans 1281–1296 (EQGNSRSKGNSPSCQS). Phosphoserine occurs at positions 1291, 1293, and 1296. Residue lysine 1310 forms a Glycyl lysine isopeptide (Lys-Gly) (interchain with G-Cter in SUMO2) linkage. A compositionally biased stretch (low complexity) spans 1312-1321 (SSGSEACSSS). Serine 1313 is modified (phosphoserine). Lysine 1335 participates in a covalent cross-link: Glycyl lysine isopeptide (Lys-Gly) (interchain with G-Cter in SUMO2). Positions 1338 to 1354 (QSPADQPEQQAESTLAS) are enriched in polar residues. Serine 1339 bears the Phosphoserine mark. The segment covering 1360–1373 (SKKKKKLRKKKTLR) has biased composition (basic residues). Phosphoserine is present on serine 1381. Threonine 1383 is subject to Phosphothreonine. Residues lysine 1391, lysine 1403, lysine 1406, and lysine 1460 each participate in a glycyl lysine isopeptide (Lys-Gly) (interchain with G-Cter in SUMO2) cross-link. Residues 1450–1461 (GDEKPDSPSKKD) show a composition bias toward basic and acidic residues. Positions 1470 to 1487 (PIETSRSGCDEVSSTSEL) are enriched in polar residues. Position 1474 is a phosphoserine (serine 1474). Glycyl lysine isopeptide (Lys-Gly) (interchain with G-Cter in SUMO2) cross-links involve residues lysine 1492 and lysine 1509. The segment at 1509–1531 (KASKHSSEISSEPGDDEEPTEGS) is disordered. WD repeat units follow at residues 1534–1573 (GHQAAVNAIQIFGNFLYTCSADTTVRVYNLVSRKCVGVFE), 1575–1618 (HTSK…EQLQ), 1659–1700 (HGPR…LLRT), 1703–1742 (GHSKTVLCMKVVNDLVFSGSSDQSVHAHNIHTGELVRIYK), 1743–1780 (GHNHAVTVVNILGKVMVTACLDKFVRVYELQSHDRLQV), and 1783–1820 (GHKDMIMCMTIHKSVIYTGCYDGSIQAVRLNLMQNYRC). A Glycyl lysine isopeptide (Lys-Gly) (interchain with G-Cter in SUMO2) cross-link involves residue lysine 1590. Lysine 1742 participates in a covalent cross-link: Glycyl lysine isopeptide (Lys-Gly) (interchain with G-Cter in SUMO2). A C2H2-type 3; atypical zinc finger spans residues 1818 to 1843 (YRCWWYGCTLIFGVVDHLKQHLLTDH). Lysine 1869 is covalently cross-linked (Glycyl lysine isopeptide (Lys-Gly) (interchain with G-Cter in SUMO2)).

Interacts with KNOP1. Interacts with TARDBP and NUP107. Interacts (via N-terminus) with RBM39. Interacts with the SH3 domains of FYN and GRB2. Post-translationally, phosphorylated by FYN in vitro. As to expression, widely expressed, with strongest expression in skeletal muscle, heart and brain (at protein level). Detected in spinal cord motor neurons.

The protein localises to the nucleus. Its subcellular location is the nucleolus. It localises to the nucleus speckle. RNA-binding protein. Specifically binds to 5'-GGGGCC-3' sequence repeats in RNA. Essential for maintenance of peripheral motor neuron and skeletal muscle function. Required for normal expression and/or alternative splicing of a number of genes in spinal cord and skeletal muscle, including the neurite outgrowth inhibitor RTN4. Also contributes to normal mitochondrial respiratory function in motor neurons, via an unknown mechanism. In Mus musculus (Mouse), this protein is Zinc finger protein 106 (Znf106).